Here is a 227-residue protein sequence, read N- to C-terminus: 2,3-bisphosphoglycerate-dependent phosphoglycerate mutase (227 aa).

Substrate contacts are provided by residues 7–14, 20–21, R59, 86–89, K97, 113–114, and 182–183; these read RHGFSEWN, TG, ERHY, RR, and GN. The active-site Tele-phosphohistidine intermediate is H8. The Proton donor/acceptor role is filled by E86.

It belongs to the phosphoglycerate mutase family. BPG-dependent PGAM subfamily. Homodimer.

It carries out the reaction (2R)-2-phosphoglycerate = (2R)-3-phosphoglycerate. It functions in the pathway carbohydrate degradation; glycolysis; pyruvate from D-glyceraldehyde 3-phosphate: step 3/5. Functionally, catalyzes the interconversion of 2-phosphoglycerate and 3-phosphoglycerate. In Histophilus somni (strain 129Pt) (Haemophilus somnus), this protein is 2,3-bisphosphoglycerate-dependent phosphoglycerate mutase.